Reading from the N-terminus, the 1186-residue chain is Sericin 1 (1186 aa).

The signal sequence occupies residues 1–21; it reads MRFVLCCTLIALAALSVKAFG. Polar residues-rich tracts occupy residues 39–48 and 104–115; these read AASSESSYLN and NGGSASAGQSRD. Disordered regions lie at residues 39–119, 131–494, and 518–1157; these read AASS…SSLR, AVAA…EDSS, and GGAT…VNRL. Residues 145–155 show a composition bias toward low complexity; that stretch reads AQQNAQANWNA. The span at 180 to 198 shows a compositional bias: basic and acidic residues; it reads SDKDITAASKDDSRADSSR. Low complexity predominate over residues 211–224; the sequence is SESAGLSDRSASSS. The segment covering 256-275 has biased composition (polar residues); it reads YYNSSPDGSYNAGTRDSSIS. Basic and acidic residues predominate over residues 286-299; the sequence is ADKDQIRAANDRSS. Residues 300–312 show a composition bias toward low complexity; that stretch reads SKQLKQSSAQISS. Positions 321–334 are enriched in basic and acidic residues; sequence SKDRQYSNDKRSKS. Polar residues-rich tracts occupy residues 356–380, 393–409, and 416–445; these read RQSNTNYADQNSVRSDSAASDQTSK, AHSSGSRGSQNQKSSSY, and FSSSTNTEKSKFSSSNSVVETSDGASASRE. 6 stretches are compositionally biased toward low complexity: residues 465–491, 518–537, 553–698, 705–1004, 1015–1075, and 1097–1145; these read ASQSSSSRSSQESASYSSSSSSSTLSE, GGATKSGASSSTQATTVSGA, SSSS…YGYS, RVSS…YSSS, SSSN…ASSE, and SSTT…TSSS. 11 tandem repeats follow at residues 593 to 630, 631 to 668, 669 to 706, 707 to 744, 745 to 782, 783 to 820, 821 to 858, 859 to 896, 897 to 934, 935 to 972, and 973 to 1010. Positions 1148-1157 are enriched in basic residues; the sequence is RSHHSGVNRL.

Produced exclusively in the middle (MSG) section of silk glands.

Its subcellular location is the secreted. Its function is as follows. Provides the silk fibroin thread with a sticky coating. Acts as a cement by sticking silk threads together. This chain is Sericin 1 (ser1), found in Bombyx mori (Silk moth).